The sequence spans 554 residues: Phenylalanine--tRNA ligase beta subunit (554 aa).

One can recognise a B5 domain in the interval 276 to 351 (LTPKSRMISV…INYGYEKFEG (76 aa)). Residues aspartate 329, aspartate 335, glutamate 338, and glutamate 339 each coordinate Mg(2+).

This sequence belongs to the phenylalanyl-tRNA synthetase beta subunit family. Type 2 subfamily. As to quaternary structure, tetramer of two alpha and two beta subunits. The cofactor is Mg(2+).

It localises to the cytoplasm. The catalysed reaction is tRNA(Phe) + L-phenylalanine + ATP = L-phenylalanyl-tRNA(Phe) + AMP + diphosphate + H(+). In Methanococcus maripaludis (strain C6 / ATCC BAA-1332), this protein is Phenylalanine--tRNA ligase beta subunit.